We begin with the raw amino-acid sequence, 236 residues long: Protein Thf1 (236 aa).

Residues 180–220 (PVEKMQKDLEQYRSNLEKMTQARKTLEDIVAAERKRRQQNA) are a coiled coil. The disordered stretch occupies residues 206–236 (EDIVAAERKRRQQNAAPDRSPESASATEAPN). The segment covering 227–236 (ESASATEAPN) has biased composition (polar residues).

The protein belongs to the THF1 family.

May be involved in photosynthetic membrane biogenesis. The protein is Protein Thf1 of Cyanothece sp. (strain PCC 7425 / ATCC 29141).